The primary structure comprises 153 residues: Lectin-like protein EP153R (153 aa).

Residues 1–30 (MYFKKKYIGLIDKNCEKKILDDSSTIKICY) lie on the Cytoplasmic side of the membrane. A helical transmembrane segment spans residues 31–51 (ILIGILIGTNMITLIYNFIFW). The Extracellular segment spans residues 52–153 (DNYIKCYRNN…YTDLLFICGK (102 aa)). An intrachain disulfide couples Cys-67 to Cys-78. N-linked (GlcNAc...) asparagine; by host glycans are attached at residues Asn-83, Asn-89, Asn-101, Asn-107, Asn-113, Asn-120, Asn-127, and Asn-143. A disulfide bond links Cys-97 and Cys-151.

It belongs to the asfivirus lectin-like protein family. As to quaternary structure, homodimer.

The protein resides in the host endoplasmic reticulum membrane. Its function is as follows. Down-regulates MHC-I expression by impairing the appropriate configuration or presentation into the plasma membrane of the latter. Participates in viral hemadsorption, which may help viral spread. Reduces the transactivating activity of host TP53, thus inhibiting apoptosis. Non-essential for virus growth in swine macrophage cell cultures. This African swine fever virus (strain Badajoz 1971 Vero-adapted) (Ba71V) protein is Lectin-like protein EP153R.